Reading from the N-terminus, the 361-residue chain is Innexin inx1 (361 aa).

Topologically, residues 1–28 (MYKLLGGLKEYLKWQDIVTDNAIFRLHN) are cytoplasmic. Residues 29-49 (LFTTVLLLTCSLIITATQYVG) traverse the membrane as a helical segment. Residues 50–109 (NPIHCIVNGLPVRPINTYCWITSTFTMPDAFLRQVGSEVAHPGVANDFGDEDAKKYYTYY) lie on the Extracellular side of the membrane. The chain crosses the membrane as a helical span at residues 110-130 (QWVCFVLFFQAMLCYTPKWIW). The Cytoplasmic portion of the chain corresponds to 131–181 (DSIEGGLLRTLIMGLNRGLCQDDEKCMKKKALIEYLLRHIKRHNMYALKYW). Residues 182–202 (FCETLCLVNIIGQLYLMNHFF) traverse the membrane as a helical segment. Topologically, residues 203-267 (DGEFFSYGLR…LPLNIVNEKT (65 aa)) are extracellular. The helical transmembrane segment at 268 to 288 (YIFLWFWYIILAALLSVLVVY) threads the bilayer. Over 289–361 (RAVILAVPSV…KIETPSSNNP (73 aa)) the chain is Cytoplasmic.

Belongs to the pannexin family. In terms of tissue distribution, expressed in embryonic neural precursors including the dorsal median neuroblast, glial cells, neuropilar glial ring, developing myoblasts cells and in a circumferential band of epithelial cells at the trochanter/coxa boundary stripe in the developing limb.

Its subcellular location is the cell membrane. The protein resides in the cell junction. It localises to the gap junction. Functionally, structural components of the gap junctions. The protein is Innexin inx1 (inx1) of Schistocerca americana (American grasshopper).